Here is an 82-residue protein sequence, read N- to C-terminus: MKTLLLTLVVVVTIVCLDLGYTLKCNQHIPPFYKTCAAGKNLCYKIFMVAAPKVPVKRGCIDVCPKSSDLVKYVCCNTDRCN.

A signal peptide spans 1-22; it reads MKTLLLTLVVVVTIVCLDLGYT. 4 cysteine pairs are disulfide-bonded: cysteine 25-cysteine 43, cysteine 36-cysteine 60, cysteine 64-cysteine 75, and cysteine 76-cysteine 81.

The protein belongs to the three-finger toxin family. Short-chain subfamily. Type IA cytotoxin sub-subfamily. Monomer in solution; Homodimer and oligomer in the presence of negatively charged lipids forming a pore with a size ranging between 20 and 30 Angstroms. In terms of tissue distribution, expressed by the venom gland.

The protein resides in the secreted. Its subcellular location is the target cell membrane. In terms of biological role, shows cytolytic activity on many different cells by forming pore in lipid membranes. In vivo, increases heart rate or kills the animal by cardiac arrest. In addition, it binds to heparin with high affinity, interacts with Kv channel-interacting protein 1 (KCNIP1) in a calcium-independent manner, and binds to integrin alpha-V/beta-3 (ITGAV/ITGB3) with moderate affinity. The protein is Cytotoxin 10 of Naja atra (Chinese cobra).